Reading from the N-terminus, the 163-residue chain is Mediator of RNA polymerase II transcription subunit 10 (163 aa).

The interval 57-79 is disordered; the sequence is AAPDPSYVQSPPSRTGLSPADPP. A compositionally biased stretch (polar residues) spans 63–72; it reads YVQSPPSRTG.

The protein belongs to the Mediator complex subunit 10 family. Component of the Mediator complex.

The protein resides in the nucleus. Component of the Mediator complex, a coactivator involved in the regulated transcription of nearly all RNA polymerase II-dependent genes. Mediator functions as a bridge to convey information from gene-specific regulatory proteins to the basal RNA polymerase II transcription machinery. Mediator is recruited to promoters by direct interactions with regulatory proteins and serves as a scaffold for the assembly of a functional preinitiation complex with RNA polymerase II and the general transcription factors. This chain is Mediator of RNA polymerase II transcription subunit 10 (NUT2), found in Coccidioides immitis (strain RS) (Valley fever fungus).